Reading from the N-terminus, the 88-residue chain is RNA-binding protein Hfq (88 aa).

The Sm domain maps to aspartate 9–valine 68.

This sequence belongs to the Hfq family. In terms of assembly, homohexamer.

In terms of biological role, RNA chaperone that binds small regulatory RNA (sRNAs) and mRNAs to facilitate mRNA translational regulation in response to envelope stress, environmental stress and changes in metabolite concentrations. Also binds with high specificity to tRNAs. This Cellvibrio japonicus (strain Ueda107) (Pseudomonas fluorescens subsp. cellulosa) protein is RNA-binding protein Hfq.